The primary structure comprises 591 residues: Mono(ADP-ribosyl)transferase SpvB (591 aa).

The TR mART core domain maps to 373–576; sequence PMMGGNSSRP…LRLSDDATAD (204 aa). NAD(+) is bound by residues Arg414 and 471-477; that span reads RGLKLDK. Residues Arg471, Ser501, and Glu538 contribute to the active site. Residue Glu538 coordinates NAD(+).

It belongs to the SpvB family.

Its subcellular location is the secreted. The catalysed reaction is L-arginyl-[protein] + NAD(+) = N(omega)-(ADP-D-ribosyl)-L-arginyl-[protein] + nicotinamide + H(+). Inhibited by novobiocin. Mono-ADP-ribosylates eukaryotic muscle and non-muscle actin on 'Arg-177'. ADP-ribosylates all actins tested, has more activity on nonmuscle beta/gamma-actin than on muscle alpha-actin. Prefers monomeric G-actin but can weakly ADP-ribosylate F-actin. ADP-ribosylation prevents the polymerization of G-actin to F-actin, causing actin filament depolymerization, destruction of the cytoskeleton and cytotoxicity. Does not possess NAD(+)-glycohydrolase activity, unlike most mART enzymes. In Salmonella typhimurium, this protein is Mono(ADP-ribosyl)transferase SpvB (spvB).